The following is a 512-amino-acid chain: NAD(P)H-quinone oxidoreductase chain 4, chloroplastic (512 aa).

Helical transmembrane passes span 4-24, 34-54, 87-107, 111-131, 134-154, 167-187, 210-230, 241-261, 273-293, 312-332, 333-353, 373-395, 416-436, and 462-482; these read LPWL…IPFI, WYAL…FGYH, MPLV…AWPV, AKLF…VFVS, LLLF…LLLV, FILY…TMAF, ILLY…FPLH, HYST…YALI, LIFA…AALT, MGFV…GAVL, QMIS…TTYD, TFAM…GFVA, IITF…LSML, and IFVI…PKMA.

The protein belongs to the complex I subunit 4 family.

It localises to the plastid. Its subcellular location is the chloroplast thylakoid membrane. The enzyme catalyses a plastoquinone + NADH + (n+1) H(+)(in) = a plastoquinol + NAD(+) + n H(+)(out). The catalysed reaction is a plastoquinone + NADPH + (n+1) H(+)(in) = a plastoquinol + NADP(+) + n H(+)(out). The sequence is that of NAD(P)H-quinone oxidoreductase chain 4, chloroplastic from Chlorokybus atmophyticus (Soil alga).